A 427-amino-acid polypeptide reads, in one-letter code: L-cysteine:1D-myo-inositol 2-amino-2-deoxy-alpha-D-glucopyranoside ligase (427 aa).

Position 46 (cysteine 46) interacts with Zn(2+). L-cysteinyl-5'-AMP contacts are provided by residues 46–49 (CGIT), threonine 61, and 84–86 (NVT). Residues 48 to 58 (ITPYDATHMGH) carry the 'HIGH' region motif. A 'ERGGDP' region motif is present at residues 186-191 (ERGGDP). L-cysteinyl-5'-AMP is bound at residue tryptophan 233. Cysteine 237 contributes to the Zn(2+) binding site. An L-cysteinyl-5'-AMP-binding site is contributed by 255–257 (GSD). Histidine 262 serves as a coordination point for Zn(2+). Residue valine 289 participates in L-cysteinyl-5'-AMP binding. Positions 295-299 (KMSKS) match the 'KMSKS' region motif.

This sequence belongs to the class-I aminoacyl-tRNA synthetase family. MshC subfamily. Monomer. Zn(2+) is required as a cofactor.

It carries out the reaction 1D-myo-inositol 2-amino-2-deoxy-alpha-D-glucopyranoside + L-cysteine + ATP = 1D-myo-inositol 2-(L-cysteinylamino)-2-deoxy-alpha-D-glucopyranoside + AMP + diphosphate + H(+). Functionally, catalyzes the ATP-dependent condensation of GlcN-Ins and L-cysteine to form L-Cys-GlcN-Ins. The polypeptide is L-cysteine:1D-myo-inositol 2-amino-2-deoxy-alpha-D-glucopyranoside ligase (Catenulispora acidiphila (strain DSM 44928 / JCM 14897 / NBRC 102108 / NRRL B-24433 / ID139908)).